The chain runs to 475 residues: tRNA-2-methylthio-N(6)-dimethylallyladenosine synthase (475 aa).

Residues 7-127 form the MTTase N-terminal domain; it reads RKLHIKSYGC…LPKLLAKARD (121 aa). Residues cysteine 16, cysteine 52, cysteine 90, cysteine 168, cysteine 172, and cysteine 175 each contribute to the [4Fe-4S] cluster site. Residues 154–388 form the Radical SAM core domain; that stretch reads RARGVSAFVT…AQLQALIDAQ (235 aa). In terms of domain architecture, TRAM spans 394 to 456; sequence RAAIGRTVEV…RYSLKGRLAS (63 aa).

This sequence belongs to the methylthiotransferase family. MiaB subfamily. In terms of assembly, monomer. Requires [4Fe-4S] cluster as cofactor.

Its subcellular location is the cytoplasm. It catalyses the reaction N(6)-dimethylallyladenosine(37) in tRNA + (sulfur carrier)-SH + AH2 + 2 S-adenosyl-L-methionine = 2-methylsulfanyl-N(6)-dimethylallyladenosine(37) in tRNA + (sulfur carrier)-H + 5'-deoxyadenosine + L-methionine + A + S-adenosyl-L-homocysteine + 2 H(+). Catalyzes the methylthiolation of N6-(dimethylallyl)adenosine (i(6)A), leading to the formation of 2-methylthio-N6-(dimethylallyl)adenosine (ms(2)i(6)A) at position 37 in tRNAs that read codons beginning with uridine. The protein is tRNA-2-methylthio-N(6)-dimethylallyladenosine synthase of Afipia carboxidovorans (strain ATCC 49405 / DSM 1227 / KCTC 32145 / OM5) (Oligotropha carboxidovorans).